Reading from the N-terminus, the 270-residue chain is Phosphatidylinositol transfer protein alpha isoform (270 aa).

Positions 58, 60, 85, 89, 96, and 194 each coordinate a 1,2-diacyl-sn-glycero-3-phospho-(1D-myo-inositol). The residue at position 215 (lysine 215) is an N6-acetyllysine. Residues 250–263 (TKRQLDEMRQKDPV) show a composition bias toward basic and acidic residues. A disordered region spans residues 250–270 (TKRQLDEMRQKDPVKGMTADD).

It belongs to the PtdIns transfer protein family. PI transfer class I subfamily. Phosphorylated by PKC in a calcium and phosphatidylserine-dependent manner.

It localises to the cytoplasm. The protein localises to the nucleus. It catalyses the reaction a 1,2-diacyl-sn-glycero-3-phosphocholine(in) = a 1,2-diacyl-sn-glycero-3-phosphocholine(out). The catalysed reaction is a 1,2-diacyl-sn-glycero-3-phospho-(1D-myo-inositol)(in) = a 1,2-diacyl-sn-glycero-3-phospho-(1D-myo-inositol)(out). Its function is as follows. Catalyzes the transfer of phosphatidylinositol (PI) and phosphatidylcholine (PC) between membranes. Shows a preference for PI and PC containing shorter saturated or monosaturated acyl chains at the sn-1 and sn-2 positions. Preference order for PC is C16:1 &gt; C16:0 &gt; C18:1 &gt; C18:0 &gt; C20:4 and for PI is C16:1 &gt; C16:0 &gt; C18:1 &gt; C18:0 &gt; C20:4 &gt; C20:3. The chain is Phosphatidylinositol transfer protein alpha isoform (PITPNA) from Oryctolagus cuniculus (Rabbit).